The sequence spans 154 residues: Bacterial ferritin (154 aa).

The Ferritin-like diiron domain maps to 1-145; that stretch reads MQGNQAVVDY…QQLRLIELIG (145 aa). The Fe cation site is built by E18, E51, H54, E93, E127, and H130.

Belongs to the bacterioferritin family. Heterooligomer of 24 subunits, arranged as 12 dimers, that are packed together to form an approximately spherical molecule with a central cavity, in which large amounts of iron can be deposited.

It carries out the reaction 4 Fe(2+) + O2 + 4 H(+) = 4 Fe(3+) + 2 H2O. It catalyses the reaction Fe(2+)(in) = Fe(2+)(out). Iron-storage protein, whose ferroxidase center binds Fe(2+), oxidizes it using dioxygen to Fe(3+), and participates in the subsequent Fe(3+) oxide mineral core formation within the central cavity of the BFR protein shell. The polypeptide is Bacterial ferritin (bfrA) (Neisseria meningitidis serogroup A / serotype 4A (strain DSM 15465 / Z2491)).